A 479-amino-acid polypeptide reads, in one-letter code: Ribosomal lysine N-methyltransferase 2 (479 aa).

Positions 22-325 (PNISICESPE…INEELFLNYG (304 aa)) constitute an SET domain. Residue tyrosine 324 coordinates S-adenosyl-L-methionine.

The protein belongs to the class V-like SAM-binding methyltransferase superfamily. RKM2 family.

Functionally, S-adenosyl-L-methionine-dependent protein-lysine N-methyltransferase that trimethylates 60S ribosomal protein L12 (RPL12A and RPL12B) at 'Lys-4' and 'Lys-11'. This is Ribosomal lysine N-methyltransferase 2 from Saccharomyces cerevisiae (strain ATCC 204508 / S288c) (Baker's yeast).